We begin with the raw amino-acid sequence, 2000 residues long: E3 ubiquitin-protein ligase TTC3 (2000 aa).

The segment at 20 to 249 is interaction with POLG; the sequence is MDDFAEGGLS…RHSCMQCVKQ (230 aa). TPR repeat units lie at residues 250–283 and 284–317; these read GELM…RPEN and HLLY…KNTW. Ser-397 carries the post-translational modification Phosphoserine. Residues 442-478 form a disordered region; the sequence is CDCHPEFLPPPSQPPRHKGKQKSRNNESEKPSSNSQV. 2 TPR repeats span residues 556–592 and 596–629; these read VLVV…YPNE and CLAY…ICRL. The disordered stretch occupies residues 804 to 828; sequence AQERMEEDLRESNPPKPEEPEETVE. Position 1029 is a phosphoserine (Ser-1029). 5 disordered regions span residues 1041–1087, 1233–1308, 1423–1448, 1806–1839, and 1894–1947; these read NKGK…GPFA, FQPD…PEDA, QSST…SSDS, LEVK…QSQK, and EEQK…VPAP. A compositionally biased stretch (polar residues) spans 1059-1070; the sequence is GTASVTPSSETV. Ser-1080 is subject to Phosphoserine. The segment covering 1268 to 1277 has biased composition (low complexity); that stretch reads DSDSSSGSAS. Polar residues predominate over residues 1829–1839; it reads GQATRSSQSQK. Over residues 1894 to 1911 the composition is skewed to basic and acidic residues; sequence EEQKKKKPNPGKDKKTSE. Low complexity predominate over residues 1912–1934; it reads AHPAASVSKSSPSPPLAAAGPSA. An RING-type; atypical zinc finger spans residues 1952 to 1991; that stretch reads CQICHEIFKSKNMRVLKCGHKFHKGCFKQWLKGQSTCPTC.

In terms of assembly, interacts (when phosphorylated on Ser-397) with AKT1, AKT2 and AKT3 (when phosphorylated). Interacts with CIT. Interacts with POLG. Interacts with HSP70. Interacts with SMURF2. Phosphorylation on Ser-397 by Akt is required for ubiquitin ligase activity. Post-translationally, proteolytically cleaved into differently sized N- and C-terminal fragments.

Its subcellular location is the nucleus. It is found in the cytoplasm. It localises to the golgi apparatus. It carries out the reaction S-ubiquitinyl-[E2 ubiquitin-conjugating enzyme]-L-cysteine + [acceptor protein]-L-lysine = [E2 ubiquitin-conjugating enzyme]-L-cysteine + N(6)-ubiquitinyl-[acceptor protein]-L-lysine.. Its pathway is protein modification; protein ubiquitination. E3 ubiquitin-protein ligase which catalyzes the formation of 'Lys-48'-polyubiquitin chains. Mediates the ubiquitination and subsequent degradation of phosphorylated Akt (AKT1, AKT2 and AKT3) in the nucleus. Acts as a terminal regulator of Akt signaling after activation; its phosphorylation by Akt, which is a prerequisite for ubiquitin ligase activity, suggests the existence of a regulation mechanism required to control Akt levels after activation. Positively regulates TGFB1-induced epithelial-mesenchymal transition and myofibroblast differentiation by mediating the ubiquitination and subsequent degradation of SMURF2. Regulates neuronal differentiation by regulating actin remodeling and Golgi organization via a signaling cascade involving RHOA, CIT and ROCK. Inhibits cell proliferation. This chain is E3 ubiquitin-protein ligase TTC3, found in Rattus norvegicus (Rat).